The sequence spans 633 residues: tRNA uridine 5-carboxymethylaminomethyl modification enzyme MnmG (633 aa).

13-18 is a binding site for FAD; that stretch reads GGGHAG. An NAD(+)-binding site is contributed by 273–287; that stretch reads GPRYCPSIEDKINRF.

This sequence belongs to the MnmG family. As to quaternary structure, homodimer. Heterotetramer of two MnmE and two MnmG subunits. The cofactor is FAD.

It is found in the cytoplasm. In terms of biological role, NAD-binding protein involved in the addition of a carboxymethylaminomethyl (cmnm) group at the wobble position (U34) of certain tRNAs, forming tRNA-cmnm(5)s(2)U34. The polypeptide is tRNA uridine 5-carboxymethylaminomethyl modification enzyme MnmG (Pseudoalteromonas atlantica (strain T6c / ATCC BAA-1087)).